A 252-amino-acid chain; its full sequence is Tumor necrosis factor ligand superfamily member 15 (252 aa).

At 1 to 39 (MAEELGLGFGEGVPVEVLPEGCRHRPEARAGLAARSKAC) the chain is on the cytoplasmic side. Residues 40-60 (LALTCCLLSFPILAGLSTLLM) form a helical; Signal-anchor for type II membrane protein membrane-spanning segment. The Extracellular segment spans residues 61–252 (AGQLRVPGKD…DKTFFGAFLL (192 aa)). Positions 96–252 (PRAHLTIKKQ…DKTFFGAFLL (157 aa)) constitute a THD domain. N-linked (GlcNAc...) asparagine glycosylation occurs at asparagine 137. A disulfide bridge connects residues cysteine 163 and cysteine 203. Asparagine 230 carries N-linked (GlcNAc...) asparagine glycosylation.

Belongs to the tumor necrosis factor family. Homotrimer.

Its subcellular location is the membrane. In terms of biological role, receptor for TNFRSF25 and TNFRSF6B. Mediates activation of NF-kappa-B. Inhibits vascular endothelial growth and angiogenesis (in vitro). Promotes activation of caspases and apoptosis. Promotes splenocyte alloactivation. This Mus musculus (Mouse) protein is Tumor necrosis factor ligand superfamily member 15 (Tnfsf15).